Consider the following 117-residue polypeptide: Large ribosomal subunit protein eL8 (117 aa).

This sequence belongs to the eukaryotic ribosomal protein eL8 family. As to quaternary structure, part of the 50S ribosomal subunit. Probably part of the RNase P complex.

It localises to the cytoplasm. Multifunctional RNA-binding protein that recognizes the K-turn motif in ribosomal RNA, the RNA component of RNase P, box H/ACA, box C/D and box C'/D' sRNAs. The protein is Large ribosomal subunit protein eL8 of Methanocaldococcus jannaschii (strain ATCC 43067 / DSM 2661 / JAL-1 / JCM 10045 / NBRC 100440) (Methanococcus jannaschii).